The sequence spans 2587 residues: Fap1 adhesin (2587 aa).

A signal peptide spans 1–85 (MGKYKRAGET…ATVVSGNVFA (85 aa)). 4 disordered regions span residues 107–158 (SSEN…SESV), 173–212 (SISE…DSVR), 515–539 (DSIP…KSIS), and 568–2558 (ESIT…GENV). The segment at 107–195 (SSENFDSEKA…IVLSESGAAS (89 aa)) is ser-rich region 1, SRR1. Low complexity-rich tracts occupy residues 121 to 158 (SLSQ…SESV) and 173 to 191 (SISE…LSES). A sufficient to block adherence to beads region spans residues 191–522 (SGAASGNKAT…NADSIPSDTT (332 aa)). The segment covering 192 to 202 (GAASGNKATSK) has biased composition (polar residues). Positions 203–212 (GTEEKQDSVR) are enriched in basic and acidic residues. Residues 516 to 2561 (SIPSDTTSQS…PNTGENVSSS (2046 aa)) are ser-rich region 2, SRR2. Low complexity-rich tracts occupy residues 519–539 (SDTT…KSIS) and 568–2545 (ESIT…VSES). Residues 2367–2587 (SESISESVSE…RKKRKSEDAE (221 aa)) form a required for localization to cell wall, fimbriae formation and adherence to saliva-coated hydroxyapatite beads (SHA) but not secretion region. Positions 2551 to 2555 (LPNTG) match the LPXTG sorting signal motif. The residue at position 2554 (threonine 2554) is a Pentaglycyl murein peptidoglycan amidated threonine. A propeptide spans 2555–2587 (GENVSSSLGLVGLSGLLFGALLGRKKRKSEDAE) (removed by sortase).

The protein belongs to the serine-rich repeat protein (SRRP) family. In terms of processing, glycosylated; occurs within the cytoplasm. It is probable that most of the Ser residues in SSR1 and SSR2 are O-GlcNAcylated. Sequential glycosylation by sugar transferases are able to generate complex sugar polymorphisms.

It is found in the cytoplasm. The protein resides in the secreted. It localises to the cell wall. The protein localises to the fimbrium. In terms of biological role, the major structural element of fimbriae. Required for adherence to saliva-coated hydroxyapatite beads (SHA), an in vitro tooth model. A Fap1-dependent increase in adherence is seen as the pH is reduced from pH 8 to pH 5. This chain is Fap1 adhesin (fap1), found in Streptococcus parasanguinis.